Reading from the N-terminus, the 75-residue chain is Small ribosomal subunit protein bS18 (75 aa).

It belongs to the bacterial ribosomal protein bS18 family. In terms of assembly, part of the 30S ribosomal subunit. Forms a tight heterodimer with protein bS6.

Binds as a heterodimer with protein bS6 to the central domain of the 16S rRNA, where it helps stabilize the platform of the 30S subunit. In Dinoroseobacter shibae (strain DSM 16493 / NCIMB 14021 / DFL 12), this protein is Small ribosomal subunit protein bS18.